Consider the following 81-residue polypeptide: uncharacterized protein (81 aa).

The first 16 residues, 1-16 (MNRLTFYGLCLSGAVG), serve as a signal peptide directing secretion. The tract at residues 55–81 (TIDPHHNHHDDHHDSHGHGHGKIKGHH) is disordered. Residues 57–71 (DPHHNHHDDHHDSHG) show a composition bias toward basic and acidic residues. Residues 72 to 81 (HGHGKIKGHH) show a composition bias toward basic residues.

It localises to the secreted. This is an uncharacterized protein from Dictyostelium discoideum (Social amoeba).